The chain runs to 370 residues: Phosphate-binding protein PstS2 (370 aa).

An N-terminal signal peptide occupies residues 1–22 (MKFARSGAAVSLLAAGTLVLTA). A lipid anchor (N-palmitoyl cysteine) is attached at Cys23. The S-diacylglycerol cysteine moiety is linked to residue Cys23. Phosphate contacts are provided by residues 54–56 (STA), Ser84, Asp102, and 191–193 (SGT).

The protein belongs to the PstS family. In terms of assembly, the complex is composed of two ATP-binding proteins (PstB), two transmembrane proteins (PstC and PstA) and a solute-binding protein (PstS).

It localises to the cell membrane. It is found in the secreted. Functionally, functions in inorganic phosphate uptake, a phosphate-binding protein, although probably not the main uptake protein under phosphate starvation. Part of the ABC transporter complex PstSACB involved in phosphate import. The sequence is that of Phosphate-binding protein PstS2 (pstS2) from Mycobacterium bovis (strain BCG / Pasteur 1173P2).